We begin with the raw amino-acid sequence, 90 residues long: DNA-binding protein HU (90 aa).

Position 4 is a phosphothreonine (threonine 4). A disordered region spans residues 56–90 (AARKGRNPQTGEEMEIPASKVPAFKPGKALKDAVK).

Belongs to the bacterial histone-like protein family. In terms of assembly, homodimer.

Its function is as follows. Histone-like DNA-binding protein which is capable of wrapping DNA to stabilize it, and thus to prevent its denaturation under extreme environmental conditions. This is DNA-binding protein HU (hup) from Geobacillus stearothermophilus (Bacillus stearothermophilus).